Here is an 861-residue protein sequence, read N- to C-terminus: FO synthase (861 aa).

Radical SAM core domains follow at residues Ile-69–Pro-319 and Val-528–Pro-763. Residues Thr-70–Leu-401 are cofG-like. 6 residues coordinate [4Fe-4S] cluster: Cys-83, Cys-87, Cys-90, Cys-542, Cys-546, and Cys-549. The tract at residues Asp-505–Val-838 is cofH-like.

This sequence in the N-terminal section; belongs to the radical SAM superfamily. CofG family. The protein in the C-terminal section; belongs to the radical SAM superfamily. CofH family. [4Fe-4S] cluster is required as a cofactor.

It carries out the reaction 5-amino-6-(D-ribitylamino)uracil + L-tyrosine + S-adenosyl-L-methionine = 5-amino-5-(4-hydroxybenzyl)-6-(D-ribitylimino)-5,6-dihydrouracil + 2-iminoacetate + 5'-deoxyadenosine + L-methionine + H(+). It catalyses the reaction 5-amino-5-(4-hydroxybenzyl)-6-(D-ribitylimino)-5,6-dihydrouracil + S-adenosyl-L-methionine = 7,8-didemethyl-8-hydroxy-5-deazariboflavin + 5'-deoxyadenosine + L-methionine + NH4(+) + H(+). It participates in cofactor biosynthesis; coenzyme F0 biosynthesis. Catalyzes the radical-mediated synthesis of 7,8-didemethyl-8-hydroxy-5-deazariboflavin (FO) from 5-amino-6-(D-ribitylamino)uracil and L-tyrosine. The sequence is that of FO synthase (fbiC) from Streptomyces avermitilis (strain ATCC 31267 / DSM 46492 / JCM 5070 / NBRC 14893 / NCIMB 12804 / NRRL 8165 / MA-4680).